We begin with the raw amino-acid sequence, 119 residues long: NADH-quinone oxidoreductase subunit A (119 aa).

Transmembrane regions (helical) follow at residues 9 to 29 (VLLFILVGIGVGVVPLLLGYV), 63 to 83 (LVAILFILFDLEIAFLFPWAV), and 88 to 108 (VGVTGFVAVLVFLAILVVGFA).

Belongs to the complex I subunit 3 family. In terms of assembly, NDH-1 is composed of 14 different subunits. Subunits NuoA, H, J, K, L, M, N constitute the membrane sector of the complex.

The protein resides in the cell inner membrane. The catalysed reaction is a quinone + NADH + 5 H(+)(in) = a quinol + NAD(+) + 4 H(+)(out). In terms of biological role, NDH-1 shuttles electrons from NADH, via FMN and iron-sulfur (Fe-S) centers, to quinones in the respiratory chain. The immediate electron acceptor for the enzyme in this species is believed to be ubiquinone. Couples the redox reaction to proton translocation (for every two electrons transferred, four hydrogen ions are translocated across the cytoplasmic membrane), and thus conserves the redox energy in a proton gradient. In Acidovorax sp. (strain JS42), this protein is NADH-quinone oxidoreductase subunit A.